Consider the following 117-residue polypeptide: Large ribosomal subunit protein uL18 (117 aa).

The protein belongs to the universal ribosomal protein uL18 family. Part of the 50S ribosomal subunit; part of the 5S rRNA/L5/L18/L25 subcomplex. Contacts the 5S and 23S rRNAs.

Its function is as follows. This is one of the proteins that bind and probably mediate the attachment of the 5S RNA into the large ribosomal subunit, where it forms part of the central protuberance. In Phytoplasma australiense, this protein is Large ribosomal subunit protein uL18.